A 329-amino-acid chain; its full sequence is Ubiquitin carboxyl-terminal hydrolase isozyme L5 (329 aa).

In terms of domain architecture, UCH catalytic spans 7–225 (EWCLMESDPG…IRFNLMAIVS (219 aa)). The residue at position 47 (K47) is an N6-succinyllysine. Catalysis depends on C88, which acts as the Nucleophile. Position 158 is an N6-acetyllysine (K158). The active-site Proton donor is H164. An N6-succinyllysine modification is found at K289. The 29-residue stretch at 291–319 (NYLPFIMELLKTLAEHQQLIPLVEKAKEK) folds into the ULD domain. Residues 313–329 (VEKAKEKQNAKKAQETK) are interaction with ADRM1.

This sequence belongs to the peptidase C12 family. As to quaternary structure, component of the 19S (PA700) regulatory complex of the 26S proteasome. Interacts with ADRM1 and NFRKB; in vitro ADRM1 and NFRKB compete for interaction with UCHL5. Component of the INO80 complex; specifically part of a complex module associated with N-terminus of INO80.

Its subcellular location is the cytoplasm. The protein resides in the nucleus. It catalyses the reaction Thiol-dependent hydrolysis of ester, thioester, amide, peptide and isopeptide bonds formed by the C-terminal Gly of ubiquitin (a 76-residue protein attached to proteins as an intracellular targeting signal).. Activated by ADRM1. Inhibited by interaction with NFRKB. Protease that specifically cleaves 'Lys-48'-linked polyubiquitin chains. Deubiquitinating enzyme associated with the 19S regulatory subunit of the 26S proteasome. Putative regulatory component of the INO80 complex; however is inactive in the INO80 complex and is activated by a transient interaction of the INO80 complex with the proteasome via ADRM1. The protein is Ubiquitin carboxyl-terminal hydrolase isozyme L5 (UCHL5) of Homo sapiens (Human).